Here is a 354-residue protein sequence, read N- to C-terminus: P2Y purinoceptor 13 (354 aa).

Residues 1-49 (MTAAIRRQRELSILPKVTLEAMNTTVMQGFNRSERCPRDTRIVQLVFPA) lie on the Extracellular side of the membrane. Residues asparagine 23 and asparagine 31 are each glycosylated (N-linked (GlcNAc...) asparagine). Residues 50 to 70 (LYTVVFLTGILLNTLALWVFV) form a helical membrane-spanning segment. Residues 71–77 (HIPSSST) lie on the Cytoplasmic side of the membrane. The helical transmembrane segment at 78 to 98 (FIIYLKNTLVADLIMTLMLPF) threads the bilayer. The Extracellular portion of the chain corresponds to 99–117 (KILSDSHLAPWQLRAFVCR). A disulfide bridge links cysteine 116 with cysteine 194. A helical transmembrane segment spans residues 118 to 138 (FSSVIFYETMYVGIVLLGLIA). The Cytoplasmic portion of the chain corresponds to 139–161 (FDRFLKIIRPLRNIFLKKPVFAK). A helical transmembrane segment spans residues 162 to 182 (TVSIFIWFFLFFISLPNTILS). The Extracellular portion of the chain corresponds to 183-211 (NKEATPSSVKKCASLKGPLGLKWHQMVNN). Residues 212 to 232 (ICQFIFWTVFILMLVFYVVIA) form a helical membrane-spanning segment. The Cytoplasmic portion of the chain corresponds to 233–252 (KKVYDSYRKSKSKDRKNNKK). The helical transmembrane segment at 253–273 (LEGKVFVVVAVFFVCFAPFHF) threads the bilayer. The Extracellular portion of the chain corresponds to 274-300 (ARVPYTHSQTNNKTDCRLQNQLFIAKE). Asparagine 285 carries N-linked (GlcNAc...) asparagine glycosylation. The chain crosses the membrane as a helical span at residues 301 to 321 (TTLFLAATNICMDPLIYIFLC). Over 322-333 (KKFTEKLPCMQG) the chain is Cytoplasmic. Positions 335-354 (KTTASSQENHSSQTDNITLG) are disordered.

The protein belongs to the G-protein coupled receptor 1 family. As to expression, strong expression in spleen and adult brain. Lower expression in placenta, lung, liver, spinal cord, thymus, small intestine, uterus, stomach, testis, fetal brain, and adrenal gland. Not detected in pancreas, heart, kidney, skeletal muscle, ovary or fetal aorta. Clearly detected in lymph node and bone marrow, weakly detected in peripheral blood mononuclear cells (PBMC) and in peripheral blood leukocytes (PBL), but not detected in polymorphonuclear cells (PMN). In the brain, detected in all brain regions examined.

It is found in the cell membrane. Functionally, receptor for ADP. Coupled to G(i)-proteins. May play a role in hematopoiesis and the immune system. The protein is P2Y purinoceptor 13 (P2RY13) of Homo sapiens (Human).